A 372-amino-acid polypeptide reads, in one-letter code: Cobalt-precorrin-5B C(1)-methyltransferase (372 aa).

It belongs to the CbiD family.

The enzyme catalyses Co-precorrin-5B + S-adenosyl-L-methionine = Co-precorrin-6A + S-adenosyl-L-homocysteine. It participates in cofactor biosynthesis; adenosylcobalamin biosynthesis; cob(II)yrinate a,c-diamide from sirohydrochlorin (anaerobic route): step 6/10. Functionally, catalyzes the methylation of C-1 in cobalt-precorrin-5B to form cobalt-precorrin-6A. The protein is Cobalt-precorrin-5B C(1)-methyltransferase of Prochlorococcus marinus subsp. pastoris (strain CCMP1986 / NIES-2087 / MED4).